Consider the following 421-residue polypeptide: Nacrein-like protein M (421 aa).

N-linked (GlcNAc...) asparagine glycosylation is present at Asn27. The region spanning 33 to 420 is the Alpha-carbonic anhydrase domain; the sequence is AGFSYDRSIC…KNKVTVYKSF (388 aa). Zn(2+) contacts are provided by His132, His134, and His157. Positions 197–206 are enriched in acidic residues; it reads DGFGDEPDDE. The segment at 197–303 is disordered; it reads DGFGDEPDDE…GENGHKHGCR (107 aa). Basic and acidic residues predominate over residues 207-219; sequence ECKRILKGHHPDN. Residues 220 to 295 show a composition bias toward low complexity; the sequence is NENGNGDNGN…NNGDNGNNGE (76 aa). 24 tandem repeats follow at residues 225 to 227, 228 to 230, 231 to 233, 234 to 236, 237 to 239, 240 to 242, 243 to 245, 246 to 248, 249 to 251, 252 to 254, 255 to 257, 258 to 260, 261 to 263, 264 to 266, 267 to 269, 270 to 272, 273 to 275, 276 to 278, 279 to 281, 282 to 284, 285 to 287, 288 to 290, 291 to 292, and 294 to 296. The 24 X 3 AA approximate tandem repeats of G-X-N stretch occupies residues 225–296; sequence GDNGNNGYNG…NGDNGNNGEN (72 aa). 361–362 contacts substrate; it reads TT.

Belongs to the alpha-carbonic anhydrase family. As to quaternary structure, homooligomer; disulfide-linked. May also be disulfide-linked to insoluble organic matrix. It depends on Zn(2+) as a cofactor. Expressed in the mantle.

Its subcellular location is the secreted. The protein localises to the extracellular space. It is found in the extracellular matrix. It catalyses the reaction hydrogencarbonate + H(+) = CO2 + H2O. In terms of biological role, acts as a negative regulator for calcification in the shells of mollusks. May function both as a calcium concentrator and as a carbonic anhydrase required for production of carbonate ions, which are assembled to CaCO(3) at mineralization sites. Is important for shell formation in both the calcitic prismatic layer and the aragonitic nacreous layerr. Shows inhibitory activity of crystal formation when present in free state but, when attached to the insoluble matrix, may regulate the form and size of aragonite crystal. This chain is Nacrein-like protein M, found in Pinctada maxima (Silver-lipped pearl oyster).